The sequence spans 140 residues: MANERTFSILKPDATRRNITGAVNAVIEAAGLRIVGQRRIRMTRAQAEKFYEVHKERPFFGELVEFMTSGPVVVQVLEGENAVAKYREVMGATNPAQAADGTIRKQFAESVGENTVHGSDSADNAKIEIAQFFTDADIAA.

ATP contacts are provided by lysine 11, phenylalanine 59, arginine 87, threonine 93, arginine 104, and asparagine 114. Residue histidine 117 is the Pros-phosphohistidine intermediate of the active site.

It belongs to the NDK family. In terms of assembly, homotetramer. Mg(2+) is required as a cofactor.

Its subcellular location is the cytoplasm. The catalysed reaction is a 2'-deoxyribonucleoside 5'-diphosphate + ATP = a 2'-deoxyribonucleoside 5'-triphosphate + ADP. It carries out the reaction a ribonucleoside 5'-diphosphate + ATP = a ribonucleoside 5'-triphosphate + ADP. Functionally, major role in the synthesis of nucleoside triphosphates other than ATP. The ATP gamma phosphate is transferred to the NDP beta phosphate via a ping-pong mechanism, using a phosphorylated active-site intermediate. The sequence is that of Nucleoside diphosphate kinase from Methylorubrum populi (strain ATCC BAA-705 / NCIMB 13946 / BJ001) (Methylobacterium populi).